The primary structure comprises 438 residues: Gamma-glutamyl phosphate reductase (438 aa).

The protein belongs to the gamma-glutamyl phosphate reductase family.

The protein resides in the cytoplasm. It catalyses the reaction L-glutamate 5-semialdehyde + phosphate + NADP(+) = L-glutamyl 5-phosphate + NADPH + H(+). The protein operates within amino-acid biosynthesis; L-proline biosynthesis; L-glutamate 5-semialdehyde from L-glutamate: step 2/2. Its function is as follows. Catalyzes the NADPH-dependent reduction of L-glutamate 5-phosphate into L-glutamate 5-semialdehyde and phosphate. The product spontaneously undergoes cyclization to form 1-pyrroline-5-carboxylate. This is Gamma-glutamyl phosphate reductase from Prochlorococcus marinus (strain NATL2A).